The sequence spans 417 residues: Gamma-glutamyl phosphate reductase (417 aa).

Belongs to the gamma-glutamyl phosphate reductase family.

It is found in the cytoplasm. The enzyme catalyses L-glutamate 5-semialdehyde + phosphate + NADP(+) = L-glutamyl 5-phosphate + NADPH + H(+). The protein operates within amino-acid biosynthesis; L-proline biosynthesis; L-glutamate 5-semialdehyde from L-glutamate: step 2/2. In terms of biological role, catalyzes the NADPH-dependent reduction of L-glutamate 5-phosphate into L-glutamate 5-semialdehyde and phosphate. The product spontaneously undergoes cyclization to form 1-pyrroline-5-carboxylate. The protein is Gamma-glutamyl phosphate reductase of Legionella pneumophila (strain Corby).